Here is a 334-residue protein sequence, read N- to C-terminus: Dual specificity mitogen-activated protein kinase kinase 6 (334 aa).

Basic residues predominate over residues 1–11 (MSQSKGKKRNP). The interval 1–34 (MSQSKGKKRNPGLKIPKEAFEQPQTSSTPPRDLD) is disordered. The interval 4 to 19 (SKGKKRNPGLKIPKEA) is d domain. Residues 53 to 314 (LEPIVELGRG…YPELMQHPFF (262 aa)) enclose the Protein kinase domain. Residues 59 to 67 (LGRGAYGVV) and Lys-82 contribute to the ATP site. Asp-179 (proton acceptor) is an active-site residue. Position 207 is a phosphoserine; by MAPK3 (Ser-207). Position 211 is a phosphothreonine; by MAPK3 (Thr-211). The tract at residues 311–334 (HPFFTVHESKAADVASFVKLILGD) is DVD domain.

Belongs to the protein kinase superfamily. STE Ser/Thr protein kinase family. MAP kinase kinase subfamily. As to quaternary structure, dimer. Interacts (via its D domain) with its substrates MAPK11, MAPK12, MAPK13 and MAPK14. Interacts (via its DVD domain) with MAP3Ks activators like MAP3K5/ASK1, MAP3K1/MEKK1, MAP3K2/MEKK2, MAP3K3/MEKK3, MAP3K4/MEKK4, MAP3K7/TAK1, MAP3K11/MLK3 and MAP3K17/TAOK2. Interacts with DCTN1. Interacts with EIF2AK2/PKR. Weakly autophosphorylated. Phosphorylated at Ser-207 and Thr-211 by the majority of M3Ks, such as MAP3K5/ASK1, MAP3K1/MEKK1, MAP3K2/MEKK2, MAP3K3/MEKK3, MAP3K4/MEKK4, MAP3K7/TAK1, MAP3K11/MLK3 and MAP3K17/TAOK2. Post-translationally, in response to genotoxic stress, MAP3K-phosphorylated MAP2K6 is ubiquitinated and degraded by the SCF(FBXO31) complex.

It is found in the nucleus. The protein resides in the cytoplasm. It localises to the cytoskeleton. It catalyses the reaction L-seryl-[protein] + ATP = O-phospho-L-seryl-[protein] + ADP + H(+). The enzyme catalyses L-threonyl-[protein] + ATP = O-phospho-L-threonyl-[protein] + ADP + H(+). The catalysed reaction is L-tyrosyl-[protein] + ATP = O-phospho-L-tyrosyl-[protein] + ADP + H(+). Its activity is regulated as follows. Activated by dual phosphorylation on Ser-207 and Thr-211 in response to a variety of cellular stresses, including UV radiation, osmotic shock, hypoxia, inflammatory cytokines, interferon gamma (IFNG), and less often by growth factors. MAP2K6/MKK6 is activated by the majority of M3Ks, such as MAP3K5/ASK1, MAP3K1/MEKK1, MAP3K2/MEKK2, MAP3K3/MEKK3, MAP3K4/MEKK4, MAP3K7/TAK1, MAP3K11/MLK3 and MAP3K17/TAOK2. Dual specificity protein kinase which acts as an essential component of the MAP kinase signal transduction pathway. With MAP3K3/MKK3, catalyzes the concomitant phosphorylation of a threonine and a tyrosine residue in the MAP kinases p38 MAPK11, MAPK12, MAPK13 and MAPK14 and plays an important role in the regulation of cellular responses to cytokines and all kinds of stresses. Especially, MAP2K3/MKK3 and MAP2K6/MKK6 are both essential for the activation of MAPK11 and MAPK13 induced by environmental stress, whereas MAP2K6/MKK6 is the major MAPK11 activator in response to TNF. MAP2K6/MKK6 also phosphorylates and activates PAK6. The p38 MAP kinase signal transduction pathway leads to direct activation of transcription factors. Nuclear targets of p38 MAP kinase include the transcription factors ATF2 and ELK1. Within the p38 MAPK signal transduction pathway, MAP3K6/MKK6 mediates phosphorylation of STAT4 through MAPK14 activation, and is therefore required for STAT4 activation and STAT4-regulated gene expression in response to IL-12 stimulation. The pathway is also crucial for IL-6-induced SOCS3 expression and down-regulation of IL-6-mediated gene induction; and for IFNG-dependent gene transcription. Has a role in osteoclast differentiation through NF-kappa-B transactivation by TNFSF11, and in endochondral ossification and since SOX9 is another likely downstream target of the p38 MAPK pathway. MAP2K6/MKK6 mediates apoptotic cell death in thymocytes. Acts also as a regulator for melanocytes dendricity, through the modulation of Rho family GTPases. This is Dual specificity mitogen-activated protein kinase kinase 6 (Map2k6) from Mus musculus (Mouse).